The chain runs to 1387 residues: Mediator of RNA polymerase II transcription subunit 13 (1387 aa).

Disordered stretches follow at residues 81 to 102 (ELNN…PEFS), 354 to 400 (HSAN…ESYS), and 620 to 676 (SVNS…DIPM). Polar residues-rich tracts occupy residues 354 to 367 (HSAN…STGE) and 390 to 400 (SRQNFPTESYS).

This sequence belongs to the Mediator complex subunit 13 family. Component of the SRB8-11 complex, which itself associates with the Mediator complex.

It localises to the nucleus. In terms of biological role, component of the SRB8-11 complex. The SRB8-11 complex is a regulatory module of the Mediator complex which is itself involved in regulation of basal and activated RNA polymerase II-dependent transcription. The SRB8-11 complex may be involved in the transcriptional repression of a subset of genes regulated by Mediator. It may inhibit the association of the Mediator complex with RNA polymerase II to form the holoenzyme complex. The polypeptide is Mediator of RNA polymerase II transcription subunit 13 (SSN2) (Kluyveromyces lactis (strain ATCC 8585 / CBS 2359 / DSM 70799 / NBRC 1267 / NRRL Y-1140 / WM37) (Yeast)).